The sequence spans 105 residues: Large ribosomal subunit protein uL24 (105 aa).

It belongs to the universal ribosomal protein uL24 family. As to quaternary structure, part of the 50S ribosomal subunit.

Its function is as follows. One of two assembly initiator proteins, it binds directly to the 5'-end of the 23S rRNA, where it nucleates assembly of the 50S subunit. In terms of biological role, one of the proteins that surrounds the polypeptide exit tunnel on the outside of the subunit. This Methylococcus capsulatus (strain ATCC 33009 / NCIMB 11132 / Bath) protein is Large ribosomal subunit protein uL24.